Here is a 447-residue protein sequence, read N- to C-terminus: Chorismate synthase, chloroplastic (447 aa).

The disordered stretch occupies residues 1-24 (MASSLSTKPFLSGSRRRSTTDGSG). The N-terminal 57 residues, 1 to 57 (MASSLSTKPFLSGSRRRSTTDGSGWSYFQTSDLRQLSNQSVQISVRRQTAPLKLVVQ), are a transit peptide targeting the chloroplast.

The protein belongs to the chorismate synthase family. As to quaternary structure, homotetramer. FMNH2 is required as a cofactor. In terms of processing, the N-terminus is blocked.

It localises to the plastid. The protein localises to the chloroplast. The enzyme catalyses 5-O-(1-carboxyvinyl)-3-phosphoshikimate = chorismate + phosphate. It participates in metabolic intermediate biosynthesis; chorismate biosynthesis; chorismate from D-erythrose 4-phosphate and phosphoenolpyruvate: step 7/7. Catalyzes the last common step of the biosynthesis of aromatic amino acids, produced via the shikimic acid pathway. The polypeptide is Chorismate synthase, chloroplastic (Capnoides sempervirens (Rock-harlequin)).